The primary structure comprises 308 residues: MEEQGNNESAYISSILPGWFSEISPLWPGEAHSLKVEKILFQGKSDYQNVVVFQSSTYGKVLVLDGVIQLTERDECAYQEMITHLPLCSIPNPKKVLVIGGGDGGVLREVSRHSSVEQIDICEIDKMVIDVSKQFFPNVAIGYEDPRVKLHVGDGVAFLKNVPEGTYDAVIVDSSDPIGPAQELFEKPFFESVARALCPGGVVCTQAESIWLHMHIIEDIVSNCRQIFKGSVNYAWTTVPTYPSGVIGFMLCSTEGPAVDFKNPINPIDADDSHTKTRGPLKFYNSEIHSASFCLPSFAKRVIESNAK.

Residues 17–254 (PGWFSEISPL…GVIGFMLCST (238 aa)) enclose the PABS domain. Gln-48 contacts S-adenosyl 3-(methylsulfanyl)propylamine. Tyr-78 contributes to the putrescine binding site. Residues Gln-79, Asp-103, Glu-123, 154-155 (DG), and Asp-173 each bind S-adenosyl 3-(methylsulfanyl)propylamine. Asp-173 functions as the Proton acceptor in the catalytic mechanism. Residues 173–176 (DSSD) and Tyr-242 each bind putrescine.

It belongs to the spermidine/spermine synthase family.

The catalysed reaction is S-adenosyl 3-(methylsulfanyl)propylamine + putrescine = S-methyl-5'-thioadenosine + spermidine + H(+). It functions in the pathway amine and polyamine biosynthesis; spermidine biosynthesis; spermidine from putrescine: step 1/1. In Hyoscyamus niger (Black henbane), this protein is Spermidine synthase 2.